A 432-amino-acid polypeptide reads, in one-letter code: Probable M18 family aminopeptidase 2 (432 aa).

Zn(2+) is bound by residues His86, His157, and His408.

It belongs to the peptidase M18 family. It depends on Zn(2+) as a cofactor.

The protein is Probable M18 family aminopeptidase 2 (apeB) of Streptomyces coelicolor (strain ATCC BAA-471 / A3(2) / M145).